The chain runs to 299 residues: Oxaloacetate decarboxylase (299 aa).

Serine 57 contacts substrate. Residue aspartate 95 coordinates Mg(2+). Positions 167 and 243 each coordinate substrate.

This sequence belongs to the isocitrate lyase/PEP mutase superfamily. Oxaloacetate decarboxylase family. Homotetramer; dimer of dimers. Mg(2+) is required as a cofactor.

It catalyses the reaction oxaloacetate + H(+) = pyruvate + CO2. Functionally, catalyzes the decarboxylation of oxaloacetate into pyruvate. Seems to play a role in maintaining cellular concentrations of bicarbonate and pyruvate. In Paraburkholderia xenovorans (strain LB400), this protein is Oxaloacetate decarboxylase.